The primary structure comprises 249 residues: tRNA (guanine-N(1)-)-methyltransferase (249 aa).

Residues Gly-113 and 133–138 (IGDFVV) each bind S-adenosyl-L-methionine.

Belongs to the RNA methyltransferase TrmD family. In terms of assembly, homodimer.

Its subcellular location is the cytoplasm. The enzyme catalyses guanosine(37) in tRNA + S-adenosyl-L-methionine = N(1)-methylguanosine(37) in tRNA + S-adenosyl-L-homocysteine + H(+). Specifically methylates guanosine-37 in various tRNAs. In Neisseria meningitidis serogroup C (strain 053442), this protein is tRNA (guanine-N(1)-)-methyltransferase.